A 113-amino-acid chain; its full sequence is Na(+)/H(+) antiporter subunit C (113 aa).

3 helical membrane-spanning segments follow: residues 4-21, 28-47, and 67-89; these read LMAV…YLLL, VIIG…LTMG, and PLPQ…FILV.

It belongs to the CPA3 antiporters (TC 2.A.63) subunit C family. In terms of assembly, forms a heterooligomeric complex that consists of seven subunits: MrpA, MrpB, MrpC, MrpD, MrpE, MrpF and MrpG.

It is found in the cell membrane. Functionally, mrp complex is a Na(+)/H(+) antiporter that is considered to be the major Na(+) excretion system in B.subtilis. Has a major role in Na(+) resistance and a minor role in Na(+)- and K(+)-dependent pH homeostasis as compared to TetB. MrpA may be the actual Na(+)/H(+) antiporter, although the six other Mrp proteins are all required for Na(+)/H(+) antiport activity and Na(+) resistance. MrpA is required for initiation of sporulation when external Na(+) concentration increases. Also transports Li(+) but not K(+), Ca(2+) or Mg(2+). In Bacillus subtilis (strain 168), this protein is Na(+)/H(+) antiporter subunit C (mrpC).